A 506-amino-acid chain; its full sequence is U3 small nucleolar RNA-associated protein 18 homolog (506 aa).

The span at 1–11 shows a compositional bias: acidic residues; the sequence is MSSDESSDGLE. Disordered stretches follow at residues 1-44 and 69-126; these read MSSD…SQAK and AKSV…PLNH. Residues 24 to 37 show a composition bias toward basic and acidic residues; that stretch reads EQEKPAKIKRERYI. Ser102, Ser104, Ser164, and Ser165 each carry phosphoserine. 4 WD repeats span residues 203-242, 331-370, 372-413, and 469-505; these read YAEGNATSIQFHPTSTAALVAGMNGLATIYAVDGQKNERL, KQEGKVKGFTWSSDSKRILVCGSTSNVSVLNLRQNLIEHI, MDDG…ASKA, and EKVGFVTSMAFSPHSSFLAFATKGKQVPLFRLKYFKG.

Belongs to the WD repeat UTP18 family. As to quaternary structure, component of U3 snoRNP complex.

The protein resides in the nucleus. Its subcellular location is the nucleolus. Functionally, component of a nucleolar small nuclear ribonucleoprotein particle (snoRNP) thought to participate in the processing and modification of pre-ribosomal RNA. Regulation of cell size by ribosome synthesis is an important parameter for stem cell maintenance and function. The sequence is that of U3 small nucleolar RNA-associated protein 18 homolog (wcd) from Drosophila melanogaster (Fruit fly).